The chain runs to 97 residues: uncharacterized protein (97 aa).

This is an uncharacterized protein from Escherichia coli (strain K12).